Consider the following 333-residue polypeptide: Glyceraldehyde-3-phosphate dehydrogenase (333 aa).

Residues 11–12 (RI), Asp-35, Met-79, and Ser-121 contribute to the NAD(+) site. D-glyceraldehyde 3-phosphate contacts are provided by residues 150 to 152 (SCT), Thr-181, 210 to 211 (TG), and Arg-233. Cys-151 acts as the Nucleophile in catalysis. Residue Asn-315 coordinates NAD(+).

It belongs to the glyceraldehyde-3-phosphate dehydrogenase family. In terms of assembly, homotetramer.

It localises to the cytoplasm. It carries out the reaction D-glyceraldehyde 3-phosphate + phosphate + NAD(+) = (2R)-3-phospho-glyceroyl phosphate + NADH + H(+). The protein operates within carbohydrate degradation; glycolysis; pyruvate from D-glyceraldehyde 3-phosphate: step 1/5. Catalyzes the oxidative phosphorylation of glyceraldehyde 3-phosphate (G3P) to 1,3-bisphosphoglycerate (BPG) using the cofactor NAD. The first reaction step involves the formation of a hemiacetal intermediate between G3P and a cysteine residue, and this hemiacetal intermediate is then oxidized to a thioester, with concomitant reduction of NAD to NADH. The reduced NADH is then exchanged with the second NAD, and the thioester is attacked by a nucleophilic inorganic phosphate to produce BPG. The sequence is that of Glyceraldehyde-3-phosphate dehydrogenase (gap) from Bacteroides fragilis (strain YCH46).